The following is a 305-amino-acid chain: Alpha-N-acetylgalactosaminide alpha-2,6-sialyltransferase 3 (305 aa).

Over 1-8 the chain is Cytoplasmic; that stretch reads MACILKRK. The helical; Signal-anchor for type II membrane protein transmembrane segment at 9 to 28 threads the bilayer; the sequence is PVLVVSFIALCILLLAMRLV. Over 29–305 the chain is Lumenal; the sequence is NDATFPLLLN…VFTHPNWTLS (277 aa). An intrachain disulfide couples Cys80 to Cys229. 2 N-linked (GlcNAc...) asparagine glycosylation sites follow: Asn239 and Asn301.

This sequence belongs to the glycosyltransferase 29 family. In adult tissues, high expression in brain, lung and heart and to a lesser extent in kidney, mammary gland, spleen, testis and thymus.

It is found in the golgi apparatus membrane. It catalyses the reaction an alpha-Neu5Ac-(2-&gt;3)-beta-D-Gal-(1-&gt;3)-D-GlcNAc derivative + CMP-N-acetyl-beta-neuraminate = an alpha-Neu5Ac-(2-&gt;3)-beta-D-Gal-(1-&gt;3)-[alpha-Neu5Ac-(2-&gt;6)]-D-GlcNAc derivative + CMP + H(+). The enzyme catalyses a ganglioside GM1b (d18:1(4E)) + CMP-N-acetyl-beta-neuraminate = a ganglioside GD1alpha (d18:1(4E)) + CMP + H(+). It carries out the reaction a globoside MSGG + CMP-N-acetyl-beta-neuraminate = a globoside DSGG + CMP + H(+). The catalysed reaction is 3-O-[alpha-Neu5Ac-(2-&gt;3)-beta-D-Gal-(1-&gt;3)-alpha-D-GalNAc]-L-Ser-[protein] + CMP-N-acetyl-beta-neuraminate = a 3-O-{alpha-Neu5Ac-(2-&gt;3)-beta-D-Gal-(1-&gt;3)-[alpha-Neu5Ac-(2-&gt;6)]-alpha-D-GalNAc}-L-seryl-[protein] + CMP + H(+). It catalyses the reaction 3-O-[alpha-Neu5Ac-(2-&gt;3)-beta-D-Gal-(1-&gt;3)-alpha-D-GalNAc]-L-Thr-[protein] + CMP-N-acetyl-beta-neuraminate = a 3-O-{alpha-Neu5Ac-(2-&gt;3)-beta-D-Gal-(1-&gt;3)-[alpha-Neu5Ac-(2-&gt;6)]-alpha-D-GalNAc}-L-threonyl-[protein] + CMP + H(+). It functions in the pathway protein modification; protein glycosylation. It participates in glycolipid biosynthesis. In terms of biological role, transfers the sialyl group (N-acetyl-alpha-neuraminyl or NeuAc) from CMP-NeuAc to the GalNAc residue on the NeuAc-alpha-2,3-Gal-beta-1,3-GalNAc sequence of glycoproteins and glycolipids forming an alpha-2,6-linkage. Produces branched type disialyl structures by transfer of a sialyl group onto a GalNAc residue inside the backbone core chains. ST6GalNAcIII prefers glycolipids to glycoproteins, predominantly catalyzing the biosynthesis of ganglioside GD1alpha from GM1b. GD1alpha is a critical molecule in the communication and interaction between neuronal cells and their supportive cells, particularly in brain tissues, and functions as an adhesion molecule in the process of metastasis. Sialylation of glycoproteins or glycosphingolipids is very important in tumor development, neuronal development, nerve repair, immunological processes and regulation of hormone sensitivity. This Mus musculus (Mouse) protein is Alpha-N-acetylgalactosaminide alpha-2,6-sialyltransferase 3 (St6galnac3).